We begin with the raw amino-acid sequence, 236 residues long: 2-C-methyl-D-erythritol 4-phosphate cytidylyltransferase (236 aa).

Belongs to the IspD/TarI cytidylyltransferase family. IspD subfamily.

It carries out the reaction 2-C-methyl-D-erythritol 4-phosphate + CTP + H(+) = 4-CDP-2-C-methyl-D-erythritol + diphosphate. The protein operates within isoprenoid biosynthesis; isopentenyl diphosphate biosynthesis via DXP pathway; isopentenyl diphosphate from 1-deoxy-D-xylulose 5-phosphate: step 2/6. In terms of biological role, catalyzes the formation of 4-diphosphocytidyl-2-C-methyl-D-erythritol from CTP and 2-C-methyl-D-erythritol 4-phosphate (MEP). This is 2-C-methyl-D-erythritol 4-phosphate cytidylyltransferase from Burkholderia pseudomallei (strain 1106a).